The following is a 1581-amino-acid chain: ATP-binding cassette sub-family C member 8 (1581 aa).

The Extracellular segment spans residues 1–30 (MPLAFCGSENHSAAYRVDQGVLNNGCFVDA). Cysteine 6 and cysteine 26 are joined by a disulfide. N-linked (GlcNAc...) asparagine glycosylation occurs at asparagine 10. Residues 31 to 47 (LNVVPHVFLLFITFPIL) form a helical membrane-spanning segment. The Cytoplasmic segment spans residues 48–72 (FIGWGSQSSKVHIHHSTWLHFPGHN). The helical transmembrane segment at 73–89 (LRWILTFMLLFVLVCEI) threads the bilayer. At 90 to 106 (AEGILSDGVTESHHLHL) the chain is on the extracellular side. Residues 107 to 123 (YMPAGMAFMAAVTSVVY) form a helical membrane-spanning segment. The Cytoplasmic portion of the chain corresponds to 124 to 136 (YHNIETSNFPKLL). A helical transmembrane segment spans residues 137 to 153 (IALLVYWTLAFITKTIK). The Extracellular portion of the chain corresponds to 154-169 (FVKFLDHAIGFSQLRF). Residues 170–186 (CLTGLLVILYGMLLLVE) form a helical membrane-spanning segment. Over 187 to 303 (VNVIRVRRYI…AFGRRLVLSS (117 aa)) the chain is Cytoplasmic. The ABC transmembrane type-1 1 domain occupies 299–602 (LVLSSTFRIL…LSSVVRSTVK (304 aa)). A helical transmembrane segment spans residues 304-319 (TFRILADLLGFAGPLC). The Extracellular portion of the chain corresponds to 320-356 (IFGIVDHLGKENDVFQPKTQFLGVYFVSSQEFLANAY). The chain crosses the membrane as a helical span at residues 357-372 (VLAVLLFLALLLQRTF). The Cytoplasmic segment spans residues 373 to 438 (LQASYYVAIE…MWFFFLCPNL (66 aa)). The chain crosses the membrane as a helical span at residues 439–454 (WAMPVQIIVGVILLYY). The Extracellular segment spans residues 455–460 (ILGVSA). The chain crosses the membrane as a helical span at residues 461-473 (LIGAAVIILLAPV). The Cytoplasmic portion of the chain corresponds to 474–541 (QYFVATKLSQ…SLRAFAIYTS (68 aa)). A helical transmembrane segment spans residues 542-557 (ISIFMNTAIPIAAVLI). Residues 558 to 576 (TFVGHVSFFKEADFSPSVA) are Extracellular-facing. A helical transmembrane segment spans residues 577–592 (FASLSLFHILVTPLFL). The Cytoplasmic portion of the chain corresponds to 593–1012 (LSSVVRSTVK…YLSSAGILLL (420 aa)). In terms of domain architecture, ABC transporter 1 spans 679-929 (VQIMGGYFTW…ECQLFEHWKT (251 aa)). 4 residues coordinate ATP: tryptophan 688, glycine 716, serine 720, and serine 721. Residue serine 720 participates in Mg(2+) binding. Glutamine 774 is a Mg(2+) binding site. The segment covering 935 to 949 (DQELEKETVTERKAT) has biased composition (basic and acidic residues). Residues 935–987 (DQELEKETVTERKATEPPQGLSRAMSSRDGLLQDEEEEEEEAAESEEDDNLSS) form a disordered region. Residues 966–984 (LQDEEEEEEEAAESEEDDN) are compositionally biased toward acidic residues. The 295-residue stretch at 1012–1306 (LSLLVFSQLL…MVRNLADMEL (295 aa)) folds into the ABC transmembrane type-1 2 domain. The helical transmembrane segment at 1013 to 1030 (SLLVFSQLLKHMVLVAID) threads the bilayer. The Extracellular segment spans residues 1031-1066 (YWLAKWTDSALTLTPAARNCSLSQECTLDQTVYAMV). The N-linked (GlcNAc...) asparagine glycan is linked to asparagine 1049. The chain crosses the membrane as a helical span at residues 1067–1083 (FTVLCSLGIVLCLVTSV). Residues 1084-1142 (TVEWTGLKVAKRLHRSLLNRIILAPMRFFETTPLGSILNRFSSDCNTIDQHIPSTLECL) lie on the Cytoplasmic side of the membrane. A helical membrane pass occupies residues 1143–1160 (SRSTLLCVSALAVISYVT). A topological domain (extracellular) is located at residue proline 1161. Residues 1162–1174 (VFLVALLPLAIVC) form a helical membrane-spanning segment. The Cytoplasmic portion of the chain corresponds to 1175-1248 (YFIQKYFRVA…FLTAANRWLE (74 aa)). The chain crosses the membrane as a helical span at residues 1249 to 1264 (VRMEYIGACVVLIAAV). At 1265-1280 (TSISNSLHRELSAGLV) the chain is on the extracellular side. Residues 1281–1296 (GLGLTYALMVSNYLNW) form a helical membrane-spanning segment. Topologically, residues 1297–1581 (MVRNLADMEL…VFASFVRADK (285 aa)) are cytoplasmic. In terms of domain architecture, ABC transporter 2 spans 1344–1578 (IQIQNLSVRY…KDSVFASFVR (235 aa)). Threonine 1380, glycine 1381, glycine 1383, lysine 1384, serine 1385, and serine 1386 together coordinate ADP. Serine 1482 is an ATP binding site.

The protein belongs to the ABC transporter superfamily. ABCC family. Conjugate transporter (TC 3.A.1.208) subfamily. In terms of assembly, forms an heterooctamer with KCNJ11; four ABCC8/SUR1 molecules interact with one KCNJ11 homotetramer.

The protein resides in the cell membrane. KATP channels are regulated by cytoplasmic ATP/ADP ratios; ATP inhibits the channel by closing the pore, while ADP activates the channel. Activated by phosphatidylinositol 4,5-biphosphate (PtdIns(4,5)P2). In terms of biological role, regulator subunit of pancreatic ATP-sensitive potassium channel (KATP), playing a major role in the regulation of insulin release. In pancreatic cells, it forms KATP channels with KCNJ11; KCNJ11 forms the channel pore while ABCC8 is required for activation and regulation. This is ATP-binding cassette sub-family C member 8 (ABCC8) from Homo sapiens (Human).